The primary structure comprises 115 residues: Large ribosomal subunit protein bL19 (115 aa).

It belongs to the bacterial ribosomal protein bL19 family.

This protein is located at the 30S-50S ribosomal subunit interface and may play a role in the structure and function of the aminoacyl-tRNA binding site. The sequence is that of Large ribosomal subunit protein bL19 from Clostridium perfringens (strain ATCC 13124 / DSM 756 / JCM 1290 / NCIMB 6125 / NCTC 8237 / Type A).